A 567-amino-acid polypeptide reads, in one-letter code: Galectin-3-binding protein A (567 aa).

A signal peptide spans 1 to 16 (MIMYIIWALLFIPVSA). The SRCR domain occupies 34–133 (VRLVGGLPSS…HQEDAGVVCD (100 aa)). 3 disulfide bridges follow: C58–C122, C71–C132, and C102–C112. N-linked (GlcNAc...) asparagine glycosylation is found at N137, N197, N200, and N204. A BACK domain is found at 272 to 374 (PVSMYEYGLR…IPVDKLYDIQ (103 aa)). 3 N-linked (GlcNAc...) asparagine glycosylation sites follow: N412, N432, and N543.

It is found in the secreted. Its subcellular location is the extracellular space. It localises to the extracellular matrix. Promotes integrin-mediated cell adhesion. In Danio rerio (Zebrafish), this protein is Galectin-3-binding protein A (lgals3bpa).